Here is a 284-residue protein sequence, read N- to C-terminus: Bifunctional protein FolD (284 aa).

Residues 165–167 (GRS), Ser190, and Ile231 each bind NADP(+).

Belongs to the tetrahydrofolate dehydrogenase/cyclohydrolase family. As to quaternary structure, homodimer.

It catalyses the reaction (6R)-5,10-methylene-5,6,7,8-tetrahydrofolate + NADP(+) = (6R)-5,10-methenyltetrahydrofolate + NADPH. The enzyme catalyses (6R)-5,10-methenyltetrahydrofolate + H2O = (6R)-10-formyltetrahydrofolate + H(+). Its pathway is one-carbon metabolism; tetrahydrofolate interconversion. Its function is as follows. Catalyzes the oxidation of 5,10-methylenetetrahydrofolate to 5,10-methenyltetrahydrofolate and then the hydrolysis of 5,10-methenyltetrahydrofolate to 10-formyltetrahydrofolate. The polypeptide is Bifunctional protein FolD (Lysinibacillus sphaericus (strain C3-41)).